A 419-amino-acid chain; its full sequence is Pregnancy-specific beta-1-glycoprotein 4 (419 aa).

A signal peptide spans 1-34 (MGPLSAPPCTQRITWKGVLLTASLLNFWNPPTTA). The Ig-like V-type domain maps to 35–144 (QVTIEAQPPK…TGHFTFTLHL (110 aa)). Asparagine 104, asparagine 111, asparagine 199, asparagine 268, asparagine 299, and asparagine 303 each carry an N-linked (GlcNAc...) asparagine glycan. 3 Ig-like C2-type domains span residues 147-234 (PKPS…VTLN), 237-327 (PKLS…VTLN), and 332-410 (PDLP…KSIT). Intrachain disulfides connect cysteine 169–cysteine 217, cysteine 262–cysteine 310, and cysteine 354–cysteine 394.

It belongs to the immunoglobulin superfamily. CEA family.

It is found in the secreted. The sequence is that of Pregnancy-specific beta-1-glycoprotein 4 (PSG4) from Homo sapiens (Human).